We begin with the raw amino-acid sequence, 352 residues long: Biotin synthase (352 aa).

The Radical SAM core domain occupies 44-262; the sequence is NRVQVSTLLS…LAVARILMPK (219 aa). [4Fe-4S] cluster-binding residues include cysteine 59, cysteine 63, and cysteine 66. Positions 103, 134, 194, and 266 each coordinate [2Fe-2S] cluster.

This sequence belongs to the radical SAM superfamily. Biotin synthase family. As to quaternary structure, homodimer. It depends on [4Fe-4S] cluster as a cofactor. Requires [2Fe-2S] cluster as cofactor.

It catalyses the reaction (4R,5S)-dethiobiotin + (sulfur carrier)-SH + 2 reduced [2Fe-2S]-[ferredoxin] + 2 S-adenosyl-L-methionine = (sulfur carrier)-H + biotin + 2 5'-deoxyadenosine + 2 L-methionine + 2 oxidized [2Fe-2S]-[ferredoxin]. It functions in the pathway cofactor biosynthesis; biotin biosynthesis; biotin from 7,8-diaminononanoate: step 2/2. Catalyzes the conversion of dethiobiotin (DTB) to biotin by the insertion of a sulfur atom into dethiobiotin via a radical-based mechanism. The chain is Biotin synthase from Pseudomonas syringae pv. syringae (strain B728a).